Reading from the N-terminus, the 231-residue chain is ATP-dependent dethiobiotin synthetase BioD (231 aa).

13 to 18 (DVGKTV) contributes to the ATP binding site. Residue Thr17 participates in Mg(2+) binding. Lys38 is an active-site residue. Residues Asp55, 116–119 (EGAG), and 176–177 (NR) contribute to the ATP site. Residues Asp55 and Glu116 each contribute to the Mg(2+) site.

The protein belongs to the dethiobiotin synthetase family. Homodimer. Mg(2+) is required as a cofactor.

Its subcellular location is the cytoplasm. It catalyses the reaction (7R,8S)-7,8-diammoniononanoate + CO2 + ATP = (4R,5S)-dethiobiotin + ADP + phosphate + 3 H(+). Its pathway is cofactor biosynthesis; biotin biosynthesis; biotin from 7,8-diaminononanoate: step 1/2. In terms of biological role, catalyzes a mechanistically unusual reaction, the ATP-dependent insertion of CO2 between the N7 and N8 nitrogen atoms of 7,8-diaminopelargonic acid (DAPA, also called 7,8-diammoniononanoate) to form a ureido ring. The chain is ATP-dependent dethiobiotin synthetase BioD from Vibrio cholerae serotype O1 (strain ATCC 39315 / El Tor Inaba N16961).